Consider the following 376-residue polypeptide: Erythronate-4-phosphate dehydrogenase (376 aa).

Substrate contacts are provided by Ser45 and Thr67. Asp147 provides a ligand contact to NAD(+). The active site involves Arg209. Asp233 contributes to the NAD(+) binding site. Glu238 is an active-site residue. The Proton donor role is filled by His255. Gly258 is a binding site for NAD(+). Tyr259 serves as a coordination point for substrate.

The protein belongs to the D-isomer specific 2-hydroxyacid dehydrogenase family. PdxB subfamily. In terms of assembly, homodimer.

The protein localises to the cytoplasm. It carries out the reaction 4-phospho-D-erythronate + NAD(+) = (R)-3-hydroxy-2-oxo-4-phosphooxybutanoate + NADH + H(+). It participates in cofactor biosynthesis; pyridoxine 5'-phosphate biosynthesis; pyridoxine 5'-phosphate from D-erythrose 4-phosphate: step 2/5. In terms of biological role, catalyzes the oxidation of erythronate-4-phosphate to 3-hydroxy-2-oxo-4-phosphonooxybutanoate. In Shewanella baltica (strain OS155 / ATCC BAA-1091), this protein is Erythronate-4-phosphate dehydrogenase.